The following is a 48-amino-acid chain: Large ribosomal subunit protein eL40 (48 aa).

This sequence belongs to the eukaryotic ribosomal protein eL40 family.

The sequence is that of Large ribosomal subunit protein eL40 from Methanoculleus marisnigri (strain ATCC 35101 / DSM 1498 / JR1).